A 196-amino-acid chain; its full sequence is UMP-CMP kinase (196 aa).

An ATP-binding site is contributed by 13-18 (GAGKGT). Residues 33 to 63 (SAGDLLRDERKRPGSQYGELIENYIKEGEIV) are NMP. Residues Arg39, 61-63 (EIV), and 93-96 (GFPR) contribute to the a ribonucleoside 5'-phosphate site. Asn100 contributes to the CMP binding site. The interval 133–143 (ERGKSSGRSDD) is LID. Arg134 contributes to the ATP binding site. Positions 140 and 151 each coordinate a ribonucleoside 5'-phosphate. Lys179 is a binding site for ATP.

It belongs to the adenylate kinase family. UMP-CMP kinase subfamily. In terms of assembly, monomer. Requires Mg(2+) as cofactor.

It is found in the nucleus. Its subcellular location is the cytoplasm. The enzyme catalyses CMP + ATP = CDP + ADP. It catalyses the reaction dCMP + ATP = dCDP + ADP. It carries out the reaction UMP + ATP = UDP + ADP. The catalysed reaction is a 2'-deoxyribonucleoside 5'-diphosphate + ATP = a 2'-deoxyribonucleoside 5'-triphosphate + ADP. The enzyme catalyses a ribonucleoside 5'-diphosphate + ATP = a ribonucleoside 5'-triphosphate + ADP. Functionally, catalyzes the phosphorylation of pyrimidine nucleoside monophosphates at the expense of ATP. Plays an important role in de novo pyrimidine nucleotide biosynthesis. Has preference for UMP and CMP as phosphate acceptors. Also displays broad nucleoside diphosphate kinase activity. The chain is UMP-CMP kinase (CMPK) from Gallus gallus (Chicken).